The sequence spans 176 residues: MDLPGPIHDFLLVFLGSGLILGGLGVVLLTNPIYSAFSLGLVLVCISLFYILSNSHFVAAAQLLIYVGAINVLILFAVMFMNGSEYYKDFNLWTIGNGLTSLVCTSILVSLITTILDTSWYGIIWTTRSNQIIEQDLISNSQQIGIHLATDFFLPFEFISIILLVALIGAIAVARQ.

The next 5 membrane-spanning stretches (helical) occupy residues 10–30, 32–52, 61–81, 92–112, and 152–172; these read FLLV…VLLT, PIYS…FYIL, AQLL…VMFM, LWTI…VSLI, and FFLP…GAIA.

Belongs to the complex I subunit 6 family. NDH is composed of at least 16 different subunits, 5 of which are encoded in the nucleus.

The protein resides in the plastid. It localises to the chloroplast thylakoid membrane. It carries out the reaction a plastoquinone + NADH + (n+1) H(+)(in) = a plastoquinol + NAD(+) + n H(+)(out). The enzyme catalyses a plastoquinone + NADPH + (n+1) H(+)(in) = a plastoquinol + NADP(+) + n H(+)(out). NDH shuttles electrons from NAD(P)H:plastoquinone, via FMN and iron-sulfur (Fe-S) centers, to quinones in the photosynthetic chain and possibly in a chloroplast respiratory chain. The immediate electron acceptor for the enzyme in this species is believed to be plastoquinone. Couples the redox reaction to proton translocation, and thus conserves the redox energy in a proton gradient. The protein is NAD(P)H-quinone oxidoreductase subunit 6, chloroplastic (ndhG) of Gossypium hirsutum (Upland cotton).